The chain runs to 337 residues: Tetraacyldisaccharide 4'-kinase (337 aa).

72-79 (TVGGSGKT) is a binding site for ATP.

The protein belongs to the LpxK family.

The enzyme catalyses a lipid A disaccharide + ATP = a lipid IVA + ADP + H(+). It participates in glycolipid biosynthesis; lipid IV(A) biosynthesis; lipid IV(A) from (3R)-3-hydroxytetradecanoyl-[acyl-carrier-protein] and UDP-N-acetyl-alpha-D-glucosamine: step 6/6. Transfers the gamma-phosphate of ATP to the 4'-position of a tetraacyldisaccharide 1-phosphate intermediate (termed DS-1-P) to form tetraacyldisaccharide 1,4'-bis-phosphate (lipid IVA). This Shewanella sediminis (strain HAW-EB3) protein is Tetraacyldisaccharide 4'-kinase.